We begin with the raw amino-acid sequence, 137 residues long: ATP synthase epsilon chain (137 aa).

The protein belongs to the ATPase epsilon chain family. In terms of assembly, F-type ATPases have 2 components, CF(1) - the catalytic core - and CF(0) - the membrane proton channel. CF(1) has five subunits: alpha(3), beta(3), gamma(1), delta(1), epsilon(1). CF(0) has three main subunits: a, b and c.

It is found in the cell membrane. Functionally, produces ATP from ADP in the presence of a proton gradient across the membrane. The chain is ATP synthase epsilon chain from Syntrophomonas wolfei subsp. wolfei (strain DSM 2245B / Goettingen).